The sequence spans 503 residues: ATP synthase subunit alpha (503 aa).

169–176 (GDRSTGKT) lines the ATP pocket.

This sequence belongs to the ATPase alpha/beta chains family. F-type ATPases have 2 components, CF(1) - the catalytic core - and CF(0) - the membrane proton channel. CF(1) has five subunits: alpha(3), beta(3), gamma(1), delta(1), epsilon(1). CF(0) has three main subunits: a(1), b(2) and c(9-12). The alpha and beta chains form an alternating ring which encloses part of the gamma chain. CF(1) is attached to CF(0) by a central stalk formed by the gamma and epsilon chains, while a peripheral stalk is formed by the delta and b chains.

It is found in the cell membrane. It catalyses the reaction ATP + H2O + 4 H(+)(in) = ADP + phosphate + 5 H(+)(out). In terms of biological role, produces ATP from ADP in the presence of a proton gradient across the membrane. The alpha chain is a regulatory subunit. This chain is ATP synthase subunit alpha, found in Dehalococcoides mccartyi (strain ATCC BAA-2266 / KCTC 15142 / 195) (Dehalococcoides ethenogenes (strain 195)).